A 138-amino-acid chain; its full sequence is Histone H2B.4 (138 aa).

Over residues 1 to 39 (MAPKAAEKKPAEKKPAGKAPAEKLPKAEKKISKDAGGSE) the composition is skewed to basic and acidic residues. The disordered stretch occupies residues 1-48 (MAPKAAEKKPAEKKPAGKAPAEKLPKAEKKISKDAGGSEKKKKKSKKS). A2 is subject to N,N,N-trimethylalanine; alternate. At A2 the chain carries N,N-dimethylalanine; alternate. Position 2 is an N-methylalanine; alternate (A2). N6-methyllysine is present on K4. An N6-acetyllysine mark is found at K8 and K13. The residue at position 14 (K14) is an N6,N6-dimethyllysine. Residues K18, K23, K29, and K30 each carry the N6-acetyllysine modification. K135 is covalently cross-linked (Glycyl lysine isopeptide (Lys-Gly) (interchain with G-Cter in ubiquitin)).

Belongs to the histone H2B family. As to quaternary structure, the nucleosome is a histone octamer containing two molecules each of H2A, H2B, H3 and H4 assembled in one H3-H4 heterotetramer and two H2A-H2B heterodimers. The octamer wraps approximately 147 bp of DNA. In terms of processing, can be acetylated to form H2BK6ac, H2BK33ac and H2BK34ac. Post-translationally, monoubiquitinated by BRE1 to form H2BK143ub1 and deubiquitinated by UBP26. Required for heterochromatic histone H3 di- and trimethylation at H3K4me. May give a specific tag for epigenetic transcriptional activation.

Its subcellular location is the nucleus. The protein resides in the chromosome. Functionally, core component of nucleosome. Nucleosomes wrap and compact DNA into chromatin, limiting DNA accessibility to the cellular machineries which require DNA as a template. Histones thereby play a central role in transcription regulation, DNA repair, DNA replication and chromosomal stability. DNA accessibility is regulated via a complex set of post-translational modifications of histones, also called histone code, and nucleosome remodeling. This is Histone H2B.4 from Arabidopsis thaliana (Mouse-ear cress).